The following is a 337-amino-acid chain: Ribosomal RNA small subunit methyltransferase H (337 aa).

Residues 45–47, aspartate 64, phenylalanine 91, aspartate 120, and glutamine 127 contribute to the S-adenosyl-L-methionine site; that span reads GGH.

The protein belongs to the methyltransferase superfamily. RsmH family.

The protein localises to the cytoplasm. It catalyses the reaction cytidine(1402) in 16S rRNA + S-adenosyl-L-methionine = N(4)-methylcytidine(1402) in 16S rRNA + S-adenosyl-L-homocysteine + H(+). In terms of biological role, specifically methylates the N4 position of cytidine in position 1402 (C1402) of 16S rRNA. The chain is Ribosomal RNA small subunit methyltransferase H from Corynebacterium glutamicum (strain R).